The sequence spans 142 residues: Nucleoside diphosphate kinase (142 aa).

ATP is bound by residues Lys-9, Phe-57, Arg-85, Thr-91, Arg-102, and Asn-112. Catalysis depends on His-115, which acts as the Pros-phosphohistidine intermediate.

The protein belongs to the NDK family. Homotetramer. It depends on Mg(2+) as a cofactor.

The protein localises to the cytoplasm. The catalysed reaction is a 2'-deoxyribonucleoside 5'-diphosphate + ATP = a 2'-deoxyribonucleoside 5'-triphosphate + ADP. The enzyme catalyses a ribonucleoside 5'-diphosphate + ATP = a ribonucleoside 5'-triphosphate + ADP. Functionally, major role in the synthesis of nucleoside triphosphates other than ATP. The ATP gamma phosphate is transferred to the NDP beta phosphate via a ping-pong mechanism, using a phosphorylated active-site intermediate. This Dehalococcoides mccartyi (strain CBDB1) protein is Nucleoside diphosphate kinase.